A 572-amino-acid chain; its full sequence is Hemagglutinin-neuraminidase (572 aa).

The Intravirion portion of the chain corresponds to 1-31; that stretch reads MEYWKHTNHGKDAGNELETSMATHGNKLTNK. The chain crosses the membrane as a helical span at residues 32–52; sequence ITYILWTIILVLLSIVFIIVL. The Virion surface portion of the chain corresponds to 53–572; the sequence is INSIKSEKAH…FKTEIPKSCS (520 aa). 2 cysteine pairs are disulfide-bonded: C190-C214 and C256-C269. Positions 252-257 are involved in neuraminidase activity; that stretch reads NRKSCS. Residues N308 and N351 are each glycosylated (N-linked (GlcNAc...) asparagine; by host). Disulfide bonds link C355–C469 and C463–C473. N-linked (GlcNAc...) asparagine; by host glycosylation occurs at N523. The cysteines at positions 535 and 544 are disulfide-linked.

Belongs to the paramyxoviruses hemagglutinin-neuraminidase family. As to quaternary structure, homotetramer; composed of disulfide-linked homodimers. Interacts with F protein trimer.

The protein localises to the virion membrane. It is found in the host cell membrane. The catalysed reaction is Hydrolysis of alpha-(2-&gt;3)-, alpha-(2-&gt;6)-, alpha-(2-&gt;8)- glycosidic linkages of terminal sialic acid residues in oligosaccharides, glycoproteins, glycolipids, colominic acid and synthetic substrates.. Attaches the virus to sialic acid-containing cell receptors and thereby initiating infection. Binding of HN protein to the receptor induces a conformational change that allows the F protein to trigger virion/cell membranes fusion. Its function is as follows. Neuraminidase activity ensures the efficient spread of the virus by dissociating the mature virions from the neuraminic acid containing glycoproteins. The chain is Hemagglutinin-neuraminidase (HN) from Homo sapiens (Human).